The sequence spans 1241 residues: DNA-directed RNA polymerase subunit beta (1241 aa).

The segment at 1195–1219 (PQDVQENVSGENVDAGYENEDVDID) is disordered.

This sequence belongs to the RNA polymerase beta chain family. As to quaternary structure, the RNAP catalytic core consists of 2 alpha, 1 beta, 1 beta' and 1 omega subunit. When a sigma factor is associated with the core the holoenzyme is formed, which can initiate transcription.

The enzyme catalyses RNA(n) + a ribonucleoside 5'-triphosphate = RNA(n+1) + diphosphate. DNA-dependent RNA polymerase catalyzes the transcription of DNA into RNA using the four ribonucleoside triphosphates as substrates. The polypeptide is DNA-directed RNA polymerase subunit beta (Clostridium acetobutylicum (strain ATCC 824 / DSM 792 / JCM 1419 / IAM 19013 / LMG 5710 / NBRC 13948 / NRRL B-527 / VKM B-1787 / 2291 / W)).